The following is a 272-amino-acid chain: Phosphate import ATP-binding protein PstB (272 aa).

The 240-residue stretch at 18–257 (VSMQNVTISY…FNDTQSIFNS (240 aa)) folds into the ABC transporter domain. 50-57 (GPSGCGKS) is an ATP binding site.

Belongs to the ABC transporter superfamily. Phosphate importer (TC 3.A.1.7) family. In terms of assembly, the complex is composed of two ATP-binding proteins (PstB), two transmembrane proteins (PstC and PstA) and a solute-binding protein (PstS).

The protein resides in the cell inner membrane. The enzyme catalyses phosphate(out) + ATP + H2O = ADP + 2 phosphate(in) + H(+). Part of the ABC transporter complex PstSACB involved in phosphate import. Responsible for energy coupling to the transport system. The polypeptide is Phosphate import ATP-binding protein PstB (Synechococcus sp. (strain CC9902)).